The following is a 260-amino-acid chain: Ribonuclease 3 (260 aa).

The region spanning 16–145 (VQLLESRLGL…VFGAVFLTSG (130 aa)) is the RNase III domain. A Mg(2+)-binding site is contributed by E58. D62 is a catalytic residue. Positions 131 and 134 each coordinate Mg(2+). The active site involves E134. The DRBM domain occupies 172-241 (DYKTLLQEMA…AQATLEKLRE (70 aa)). The disordered stretch occupies residues 219–260 (ATGRSKKEAEQSAAQATLEKLREDAACPTSPPPGTPRHDTPA).

Belongs to the ribonuclease III family. As to quaternary structure, homodimer. The cofactor is Mg(2+).

The protein localises to the cytoplasm. It carries out the reaction Endonucleolytic cleavage to 5'-phosphomonoester.. Its function is as follows. Digests double-stranded RNA. Involved in the processing of primary rRNA transcript to yield the immediate precursors to the large and small rRNAs (23S and 16S). Processes some mRNAs, and tRNAs when they are encoded in the rRNA operon. Processes pre-crRNA and tracrRNA of type II CRISPR loci if present in the organism. This is Ribonuclease 3 from Myxococcus xanthus (strain DK1622).